The chain runs to 82 residues: MRLVVCLVFLASFALVCQGQVYKGGYTRPIPRPPPFVRPLPGGPISPYNGCPVSCRGISFSQARSCCSRLGRCCHVGKGYSG.

The first 19 residues, Met1 to Gly19, serve as a signal peptide directing secretion. A Pyrrolidone carboxylic acid modification is found at Gln20. 3 disulfides stabilise this stretch: Cys51–Cys66, Cys55–Cys73, and Cys67–Cys74. Ser81 bears the Serine amide mark.

This sequence belongs to the penaeidin family.

The protein resides in the cytoplasmic granule. Functionally, antibacterial and antifungal activity. Presents chitin-binding activity. The sequence is that of Penaeidin-3g from Penaeus vannamei (Whiteleg shrimp).